The primary structure comprises 351 residues: Caveolin-2 (351 aa).

Over residues 1-14 the composition is skewed to polar residues; sequence MTRQNTSESDNTQR. Disordered stretches follow at residues 1 to 55, 71 to 93, and 144 to 193; these read MTRQ…QGIA, HRTSLNQEVPTPQRRSHPQYDNL, and QKGS…PEME. The Cytoplasmic portion of the chain corresponds to 1-261; sequence MTRQNTSESD…FEIVRIYSYK (261 aa). Positions 22 to 31 are enriched in acidic residues; sequence TVDDIDELTD. Over residues 38 to 51 the composition is skewed to basic residues; the sequence is HHHHHHHHEHHHQH. Residues 167–184 show a composition bias toward low complexity; that stretch reads PAQQSAPPTQQSRPQTTS. Positions 262–290 form an intramembrane region, helical; sequence ILTLIFGLIIAFLGGILFALFAFLNIWIF. At 291 to 351 the chain is on the cytoplasmic side; that stretch reads RPILILTRMA…EVWEKHIHHV (61 aa).

Belongs to the caveolin family. Homooligomer. As to expression, expressed in intracellular bodies in intestinal cells.

It is found in the golgi apparatus membrane. It localises to the cell membrane. Its subcellular location is the membrane. The protein resides in the caveola. The protein localises to the apical cell membrane. May act as a scaffolding protein within caveolar membranes. Interacts directly with G-protein alpha subunits and can regulate their activity. Thought to have a role in the uptake of lipids and proteins in the intestinal cells; operates in the apical uptake of lipid markers and trafficking of yolk proteins. Affects fecundity and egg laying. In Caenorhabditis elegans, this protein is Caveolin-2 (cav-2).